Here is a 313-residue protein sequence, read N- to C-terminus: MIVVTGGAGFIGANIIHALNLRGETDILVVDDLTDGTRFRNLAELDVTDYMDKGEFLERVKANDLPMGIRAVFHEGACSDTTEWDGKFMMENNYTYSKVLLHWCLDRKVPFLYASSAAVYGASDEFREERECERPLNVYGYSKWQFDQYVRKILPSARSQIVGFRYFNVYGPREQHKGKMASVAYHLHEQIKAGQNPKLFEGWDGYSDGGQQRDFVYVDDVCKVNLWFYDNPEQSGIFNLGTGRAQSFLDVAQAVIRYHGKGSVEFIPFPDELKGRYQSFTQADITALRDVGYTAEFADVASGVESYLAWLDR.

NADP(+)-binding positions include 10-11 (FI), 31-32 (DD), Arg38, Lys53, 75-79 (EGACS), and Asn92. Tyr139 (proton acceptor) is an active-site residue. Lys143 contacts NADP(+). Asn168 is a binding site for substrate. Positions 169 and 177 each coordinate NADP(+). Lys177 acts as the Proton acceptor in catalysis. Substrate contacts are provided by residues Lys179, His186, 200–203 (FEGW), Arg213, and Tyr277.

It belongs to the NAD(P)-dependent epimerase/dehydratase family. HldD subfamily. In terms of assembly, homopentamer. Requires NADP(+) as cofactor.

The enzyme catalyses ADP-D-glycero-beta-D-manno-heptose = ADP-L-glycero-beta-D-manno-heptose. The protein operates within nucleotide-sugar biosynthesis; ADP-L-glycero-beta-D-manno-heptose biosynthesis; ADP-L-glycero-beta-D-manno-heptose from D-glycero-beta-D-manno-heptose 7-phosphate: step 4/4. Functionally, catalyzes the interconversion between ADP-D-glycero-beta-D-manno-heptose and ADP-L-glycero-beta-D-manno-heptose via an epimerization at carbon 6 of the heptose. This is ADP-L-glycero-D-manno-heptose-6-epimerase from Marinobacter nauticus (strain ATCC 700491 / DSM 11845 / VT8) (Marinobacter aquaeolei).